The chain runs to 2300 residues: Protein Ycf2 (2300 aa).

1642-1649 (GSIGTGRS) contributes to the ATP binding site.

Belongs to the Ycf2 family.

It localises to the plastid. It is found in the chloroplast stroma. Functionally, probable ATPase of unknown function. Its presence in a non-photosynthetic plant (Epifagus virginiana) and experiments in tobacco indicate that it has an essential function which is probably not related to photosynthesis. This chain is Protein Ycf2, found in Vitis vinifera (Grape).